We begin with the raw amino-acid sequence, 547 residues long: MEIAAETTGPAGVTTDVTNAEESTEQPATRYMQGWALASLTVAFMSICLVLAIDNTILATAIPHITSDFKSLNDIGWYGSSYLIAQMALLPTCGRLYAFYNIKWVYCLSLAIFELGSIIAAVAPNSMSLIIGRAISGLGAAGLVSGTTTILSYCVSLRNQAMLSPIVLGMYNIGSAMGPLIGGSITDNKVLTWRFIFWINLPFGAVALVLVWFTLRKPPPAVKGNLLWVQKLRQLDLPGATLLLGATTCLNLALQWGGIVYPWSDSKVFGCLIGFGLLLITFLCLQWRGKENANIPLRIFRSRTVSASCGFMMLVQVAIVVQSYFWPIYFQSVRNTNARDSGINLLPLIISNSLSTLCAGSLASRFGHYVPFMWVGPLILATGGGLYQLVRPDTPSGKWIGFQILSGVGYGCCSQMPILAVQVVLRKPDIPTGLVMIMFFQMLGGALAPSVGQNLFTDGLLRNLTKVQGIDATAVVAAGASGFRAIVPSELLNAVVDAFNSALRDVFWVGVATPALAWIASWAMEWRQLPDSKKKVTETPAEEGREK.

Positions 1 to 23 are disordered; it reads MEIAAETTGPAGVTTDVTNAEES. Helical transmembrane passes span 33 to 53, 74 to 94, 104 to 124, 135 to 155, 165 to 185, 195 to 215, 240 to 260, 267 to 287, 310 to 330, 343 to 363, 370 to 390, 399 to 419, and 432 to 452; these read QGWA…VLAI, DIGW…PTCG, WVYC…AVAP, ISGL…SYCV, PIVL…GGSI, FIFW…WFTL, ATLL…GGIV, KVFG…CLQW, GFMM…PIYF, INLL…GSLA, VPFM…YQLV, WIGF…MPIL, and TGLV…PSVG. Residue asparagine 463 is glycosylated (N-linked (GlcNAc...) asparagine). Residues 506–526 form a helical membrane-spanning segment; the sequence is VFWVGVATPALAWIASWAMEW.

This sequence belongs to the major facilitator superfamily. TCR/Tet family.

It localises to the cell membrane. Functionally, MFS-type transporter; part of the gene cluster that mediates the biosynthesis of luteodienoside A, a glycosylated polyketide consisting of an unusual 1-O-beta-D-glucopyranosyl-myo-inositol (glucinol) ester of 3-hydroxy-2,2,4-trimethylocta-4,6-dienoic acid. LtbE is probably involved in the secretion of luteodienoside A. This Aspergillus luteorubrus protein is MFS-type transporter ltbE.